The primary structure comprises 163 residues: Large ribosomal subunit protein mL59 (163 aa).

Residues 33–53 (PAGADPETHKTPYQEESPNPF) form a disordered region.

This sequence belongs to the mitochondrion-specific ribosomal protein mL59 family. In terms of assembly, component of the mitochondrial large ribosomal subunit (mt-LSU). Mature N.crassa 74S mitochondrial ribosomes consist of a small (37S) and a large (54S) subunit. The 37S small subunit contains a 16S ribosomal RNA (16S mt-rRNA) and 32 different proteins. The 54S large subunit contains a 23S rRNA (23S mt-rRNA) and 42 different proteins.

It is found in the mitochondrion. Its function is as follows. Component of the mitochondrial ribosome (mitoribosome), a dedicated translation machinery responsible for the synthesis of mitochondrial genome-encoded proteins, including at least some of the essential transmembrane subunits of the mitochondrial respiratory chain. The mitoribosomes are attached to the mitochondrial inner membrane and translation products are cotranslationally integrated into the membrane. In Neurospora crassa (strain ATCC 24698 / 74-OR23-1A / CBS 708.71 / DSM 1257 / FGSC 987), this protein is Large ribosomal subunit protein mL59 (mrpl25).